The following is an 88-amino-acid chain: Small ribosomal subunit protein bS20 (88 aa).

Belongs to the bacterial ribosomal protein bS20 family.

Functionally, binds directly to 16S ribosomal RNA. This Clostridium kluyveri (strain NBRC 12016) protein is Small ribosomal subunit protein bS20.